The chain runs to 82 residues: MAHKKGQGASRNGRDSESKRLGMKVGAGQRVTTGSILVRQRGTKWHPAKNVGRGRDDTLFALVNGIVVLRKTDRTYVSVLPE.

The segment at 1-26 (MAHKKGQGASRNGRDSESKRLGMKVG) is disordered.

Belongs to the bacterial ribosomal protein bL27 family.

The protein is Large ribosomal subunit protein bL27 of Chlamydia felis (strain Fe/C-56) (Chlamydophila felis).